We begin with the raw amino-acid sequence, 335 residues long: Tumor necrosis factor receptor superfamily member 6 (335 aa).

Positions 1–25 (MLGIWTLLPLVLTSVARLSSKSVNA) are cleaved as a signal peptide. Topologically, residues 26–173 (QVTDINSKGL…KCKEEGSRSN (148 aa)) are extracellular. A glycan (O-linked (GalNAc...) threonine) is linked at Thr28. TNFR-Cys repeat units lie at residues 47–83 (QNLEGLHHDGQFCHKPCPPGERKARDCTVNGDEPDCV), 84–127 (PCQE…NTKC), and 128–166 (RCKPNFFCNSTVCEHCDPCTKCEHGIIKECTLTSNTKCK). 8 disulfides stabilise this stretch: Cys59–Cys73, Cys63–Cys82, Cys85–Cys101, Cys104–Cys119, Cys107–Cys127, Cys129–Cys143, Cys146–Cys157, and Cys149–Cys165. 2 N-linked (GlcNAc...) asparagine glycosylation sites follow: Asn118 and Asn136. A helical membrane pass occupies residues 174–190 (LGWLCLLLLPIPLIVWV). Topologically, residues 191-335 (KRKEVQKTCR…NFRNEIQSLV (145 aa)) are cytoplasmic. The S-palmitoyl cysteine moiety is linked to residue Cys199. Ser209 carries the phosphoserine modification. The segment at 212 to 317 (SPTLNPETVA…EKIQTIILKD (106 aa)) is interaction with HIPK3. The residue at position 214 (Thr214) is a Phosphothreonine. Ser225 carries the post-translational modification Phosphoserine. The segment at 230–254 (SKYITTIAGVMTLSQVKGFVRKNGV) is interaction with CALM. One can recognise a Death domain in the interval 230 to 314 (SKYITTIAGV…TLAEKIQTII (85 aa)). (Microbial infection) N-beta-linked (GlcNAc) arginine glycosylation is present at Arg250.

Component of the death-induced signaling complex (DISC) composed of cell surface receptor FAS/CD95, adapter protein FADD and the CASP8 protease; recruitment of CASP8 to the complex is required for processing of CASP8 into the p18 and p10 subunits. Interacts directly (via DED domain) with NOL3 (via CARD domain); inhibits death-inducing signaling complex (DISC) assembly by inhibiting the increase in FAS-FADD binding induced by FAS activation. Binds DAXX. Interacts with HIPK3. Part of a complex containing HIPK3 and FADD. Binds RIPK1 and FAIM2. Interacts with BABAM2 and FEM1B. Interacts with CALM. In the absence of stimulation, interacts with BIRC2, DDX3X and GSK3B. The interaction with BIRC2 and DDX3X is further enhanced upon receptor stimulation and accompanied by DDX3X and BIRC2 cleavage. (Microbial infection) Glycosylated at Arg-250 by enteropathogenic E.coli protein NleB1: arginine GlcNAcylation prevents homotypic/heterotypic death domain interactions. In terms of processing, palmitoylated. Palmitoylation by ZDHHC7 prevents the lysosomal degradation of FAS regulating its expression at the plasma membrane. Post-translationally, N- and O-glycosylated. O-glycosylated with core 1 or possibly core 8 glycans. Isoform 1 and isoform 6 are expressed at equal levels in resting peripheral blood mononuclear cells. After activation there is an increase in isoform 1 and decrease in the levels of isoform 6.

The protein resides in the cell membrane. It is found in the membrane raft. The protein localises to the secreted. Functionally, receptor for TNFSF6/FASLG. The adapter molecule FADD recruits caspase CASP8 to the activated receptor. The resulting death-inducing signaling complex (DISC) performs CASP8 proteolytic activation which initiates the subsequent cascade of caspases (aspartate-specific cysteine proteases) mediating apoptosis. FAS-mediated apoptosis may have a role in the induction of peripheral tolerance, in the antigen-stimulated suicide of mature T-cells, or both. The secreted isoforms 2 to 6 block apoptosis (in vitro). In Homo sapiens (Human), this protein is Tumor necrosis factor receptor superfamily member 6 (FAS).